We begin with the raw amino-acid sequence, 765 residues long: Zinc transporter ZIP6 (765 aa).

Residues 1 to 20 (MATDLSVIMILTFALWVTSP) form the signal peptide. Over 21–335 (LHELQSTAAF…PKTYSLQIAW (315 aa)) the chain is Extracellular. An N-linked (GlcNAc...) asparagine glycan is attached at asparagine 68. 2 stretches are compositionally biased toward basic and acidic residues: residues 96-135 (DHEH…DHEH) and 174-186 (RPAE…RNIK). 2 disordered regions span residues 96-196 (DHEH…EVTS) and 209-257 (VETI…SEPR). Over residues 187–196 (ESASSSEVTS) the composition is skewed to low complexity. Over residues 224 to 233 (VNPSTPPSIT) the composition is skewed to polar residues. Positions 238–247 (VGRLSRLARK) are enriched in basic residues. Over residues 248–257 (KSNESVSEPR) the composition is skewed to basic and acidic residues. N-linked (GlcNAc...) asparagine glycosylation is found at asparagine 250, asparagine 275, and asparagine 292. A helical membrane pass occupies residues 336 to 356 (LGGFIAISIISFLSLLGVILV). The Cytoplasmic segment spans residues 357 to 365 (PLMNRVFFK). The helical transmembrane segment at 366 to 386 (FLLSFLVALAVGTLSGDALLH) threads the bilayer. Residues 387-433 (LLPHSHASHQHSHSHEEPAMEMKRGPLFSHLSAQNIEESSYFDSTWK) lie on the Extracellular side of the membrane. Residues 434–454 (GLTALGGLYFMFLVEHVLTLI) traverse the membrane as a helical segment. Residues 455-667 (KQFKDKKKKN…LKAGMTVKQA (213 aa)) lie on the Cytoplasmic side of the membrane. The interval 458 to 519 (KDKKKKNQKK…EPSPFDSQQP (62 aa)) is disordered. Residues 475–495 (ESKKQLSKYDSQLSSNEEKVD) adopt a coiled-coil conformation. Serine 481 and serine 488 each carry phosphoserine. Basic and acidic residues predominate over residues 490 to 508 (NEEKVDPGERPESYLRADS). Residues 509-519 (QEPSPFDSQQP) show a composition bias toward polar residues. Residues 668–688 (VLYNALSAMLAYLGMATGIFI) traverse the membrane as a helical segment. Topologically, residues 689–696 (GHYAENVS) are extracellular. Asparagine 694 carries N-linked (GlcNAc...) asparagine glycosylation. Residues 697–717 (MWIFALTAGLFMYVALVDMVP) form a helical membrane-spanning segment. Residues 718-734 (EMLHNDASDHGCSRWGY) lie on the Cytoplasmic side of the membrane. A helical transmembrane segment spans residues 735-755 (FFLQNAGILLGFGIMLLISIF). Residues 756–765 (EHKIVFRINF) lie on the Extracellular side of the membrane.

It belongs to the ZIP transporter (TC 2.A.5) family. In terms of assembly, interacts with SLC39A10; which triggers cells to undergo EMT and mitosis. Found in a complex with SLC39A6, SLC39A10 and with the 'Ser-727' phosphorylated form of STAT3 throughout mitosis. Found in a complex with SLC39A6, SLC39A10 and with NCAM1; this complex controls NCAM1 phosphorylation and integration into focal adhesion complexes during epithelial-to-mesenchymal transition (EMT). Found in a complex with SLC39A6, SLC39A10 and with GSK3B that controls NCAM1 phosphorylation. Post-translationally, cleaved on the N-terminus before locating to the plasma membrane. N-glycosylated. In terms of processing, phosphorylated by ZAP70 in response to TCR stimulation leading to its activation. Highly expressed in the brain and testis. In the brain strongly expressed in the CA1 and CA3 regions, Purkinje cells in cerebellum and dentate gyrus in hippocampus. In testis found in spermatids or mature sperms in the central areas of seminiferous tubules.

The protein resides in the cell membrane. The protein localises to the cell projection. It localises to the lamellipodium membrane. Its subcellular location is the membrane raft. It is found in the apical cell membrane. The catalysed reaction is Zn(2+)(in) = Zn(2+)(out). Functionally, zinc-influx transporter which plays a role in zinc homeostasis and in the induction of epithelial-to-mesenchymal transition (EMT). When associated with SLC39A10, the heterodimer formed by SLC39A10 and SLC39A6 mediates cellular zinc uptake to trigger cells to undergo epithelial- to-mesenchymal transition (EMT). The SLC39A10-SLC39A6 heterodimer also controls NCAM1 phosphorylation and its integration into focal adhesion complexes during EMT. Zinc influx inactivates GSK3B, enabling unphosphorylated SNAI1 in the nucleus to down-regulate adherence genes such as E-cadherin, causing loss of cell adherence. In addition, the SLC39A10-SLC39A6 heterodimer plays an essentiel role in initiating mitosis by importing zinc into cells to initiate a pathway resulting in the onset of mitosis. Participates in the T-cell receptor signaling regulation by mediating cellular zinc uptake into activated lymphocytes. Regulates the zinc influx necessary for proper meiotic progression to metaphase II (MII) that allows the oocyte-to-egg transition. This Mus musculus (Mouse) protein is Zinc transporter ZIP6.